Consider the following 66-residue polypeptide: Small ribosomal subunit protein bS21 (66 aa).

This sequence belongs to the bacterial ribosomal protein bS21 family.

This is Small ribosomal subunit protein bS21 from Rickettsia felis (strain ATCC VR-1525 / URRWXCal2) (Rickettsia azadi).